The primary structure comprises 576 residues: Arginine--tRNA ligase (576 aa).

The 'HIGH' region motif lies at 122–132 (PNVAKEMHVGH).

Belongs to the class-I aminoacyl-tRNA synthetase family. Monomer.

It localises to the cytoplasm. It carries out the reaction tRNA(Arg) + L-arginine + ATP = L-arginyl-tRNA(Arg) + AMP + diphosphate. The polypeptide is Arginine--tRNA ligase (Serratia proteamaculans (strain 568)).